A 427-amino-acid polypeptide reads, in one-letter code: Chitin disaccharide deacetylase (427 aa).

An N-terminal signal peptide occupies residues 1 to 22 (MKLNKLAIATLVSAALSQYAFA). One can recognise a NodB homology domain in the interval 28–326 (GTIYLTFDDG…LAKQAGYVFD (299 aa)). Chitin-binding type-3 domains lie at 333-375 (PNWQ…SSLW) and 382-419 (TNWTQNVSYKQGDVVTYQGLRYLVNVPHVSQADWTPNS).

It belongs to the polysaccharide deacetylase family. Carbohydrate-binding module 12 subfamily.

It catalyses the reaction N,N'-diacetylchitobiose + H2O = N-acetyl-beta-D-glucosaminyl-(1-&gt;4)-D-glucosamine + acetate. It participates in glycan degradation; chitin degradation. Functionally, specifically catalyzes the degradation of N,N'-diacetylchitobiose. Key enzyme in the chitin catabolic cascade. The chain is Chitin disaccharide deacetylase (deaA) from Vibrio alginolyticus.